Reading from the N-terminus, the 233-residue chain is Pyridoxal 5'-phosphate synthase subunit PdxT (233 aa).

61-63 provides a ligand contact to L-glutamine; it reads GES. Residue C93 is the Nucleophile of the active site. L-glutamine contacts are provided by residues R127 and 163 to 164; that span reads IR. Active-site charge relay system residues include H212 and E214.

Belongs to the glutaminase PdxT/SNO family. In the presence of PdxS, forms a dodecamer of heterodimers. Only shows activity in the heterodimer.

The catalysed reaction is aldehydo-D-ribose 5-phosphate + D-glyceraldehyde 3-phosphate + L-glutamine = pyridoxal 5'-phosphate + L-glutamate + phosphate + 3 H2O + H(+). It carries out the reaction L-glutamine + H2O = L-glutamate + NH4(+). Its pathway is cofactor biosynthesis; pyridoxal 5'-phosphate biosynthesis. Functionally, catalyzes the hydrolysis of glutamine to glutamate and ammonia as part of the biosynthesis of pyridoxal 5'-phosphate. The resulting ammonia molecule is channeled to the active site of PdxS. The chain is Pyridoxal 5'-phosphate synthase subunit PdxT from Paenarthrobacter aurescens (strain TC1).